We begin with the raw amino-acid sequence, 65 residues long: Small ribosomal subunit protein eS27 (65 aa).

The Zn(2+) site is built by cysteine 20, cysteine 23, cysteine 39, and cysteine 42. The C4-type zinc-finger motif lies at 20-42 (CIDCGNEQIVFSHPATPVRCLVC).

This sequence belongs to the eukaryotic ribosomal protein eS27 family. In terms of assembly, part of the 30S ribosomal subunit. The cofactor is Zn(2+).

The sequence is that of Small ribosomal subunit protein eS27 from Thermococcus kodakarensis (strain ATCC BAA-918 / JCM 12380 / KOD1) (Pyrococcus kodakaraensis (strain KOD1)).